We begin with the raw amino-acid sequence, 617 residues long: 1-deoxy-D-xylulose-5-phosphate synthase (617 aa).

Thiamine diphosphate-binding positions include His76 and 117-119; that span reads GHS. Asp148 contributes to the Mg(2+) binding site. Thiamine diphosphate contacts are provided by residues 149-150, Asn177, Tyr285, and Glu366; that span reads GA. Residue Asn177 coordinates Mg(2+).

This sequence belongs to the transketolase family. DXPS subfamily. Homodimer. It depends on Mg(2+) as a cofactor. The cofactor is thiamine diphosphate.

It carries out the reaction D-glyceraldehyde 3-phosphate + pyruvate + H(+) = 1-deoxy-D-xylulose 5-phosphate + CO2. It functions in the pathway metabolic intermediate biosynthesis; 1-deoxy-D-xylulose 5-phosphate biosynthesis; 1-deoxy-D-xylulose 5-phosphate from D-glyceraldehyde 3-phosphate and pyruvate: step 1/1. Catalyzes the acyloin condensation reaction between C atoms 2 and 3 of pyruvate and glyceraldehyde 3-phosphate to yield 1-deoxy-D-xylulose-5-phosphate (DXP). In Histophilus somni (strain 2336) (Haemophilus somnus), this protein is 1-deoxy-D-xylulose-5-phosphate synthase.